Reading from the N-terminus, the 375-residue chain is CMP-N-acetylneuraminate-beta-1,4-galactoside alpha-2,3-sialyltransferase (375 aa).

Residues 1-8 (MGLLVFVR) lie on the Cytoplasmic side of the membrane. Residues 9-28 (NLLLALCLFLVLGFLYYSAW) traverse the membrane as a helical; Signal-anchor for type II membrane protein segment. Residues 29–375 (KLHLLQWEED…RVITDLSSGI (347 aa)) lie on the Lumenal side of the membrane. Asparagine 80 and asparagine 171 each carry an N-linked (GlcNAc...) asparagine glycan. A disulfide bridge connects residues cysteine 160 and cysteine 314.

Belongs to the glycosyltransferase 29 family. In terms of processing, the soluble form derives from the membrane form by proteolytic processing. In terms of tissue distribution, highly expressed in adult skeletal muscle and in all fetal tissues examined and to a much lesser extent in placenta, lung and liver.

The protein resides in the golgi apparatus. The protein localises to the golgi stack membrane. It is found in the secreted. It carries out the reaction a beta-D-galactosyl-(1-&gt;4)-N-acetyl-beta-D-glucosaminyl derivative + CMP-N-acetyl-beta-neuraminate = an N-acetyl-alpha-neuraminyl-(2-&gt;3)-beta-D-galactosyl-(1-&gt;4)-N-acetyl-beta-D-glucosaminyl derivative + CMP + H(+). It functions in the pathway protein modification; protein glycosylation. In terms of biological role, catalyzes the formation of the NeuAc-alpha-2,3-Gal-beta-1,4-GlcNAc-, NeuAc-alpha-2,3-Gal-beta-1,3-GlcNAc- and NeuAc-alpha-2,3-Gal-beta-1,3-GalNAc- sequences found in terminal carbohydrate groups of glycoproteins and glycolipids. The highest activity is toward Gal-beta-1,3-GlcNAc and the lowest toward Gal-beta-1,3-GalNAc. The sequence is that of CMP-N-acetylneuraminate-beta-1,4-galactoside alpha-2,3-sialyltransferase (ST3GAL3) from Homo sapiens (Human).